Consider the following 216-residue polypeptide: Maintenance of carboxysome distribution protein A (216 aa).

ATP is bound by residues Gly18, Gly19, Gly21, Lys22, Thr23, Thr24, and Gln47. Position 23 (Thr23) interacts with Mg(2+).

The protein belongs to the ParA family. McdA subfamily. As to quaternary structure, homodimerizes in the presence of ATP. Each subunit binds 1 ATP molecule; some residues cross the dimer interface to contact ATP in the other subunit. Forms a complex with McdB.

It localises to the cytoplasm. Its subcellular location is the nucleoid. It catalyses the reaction ATP + H2O = ADP + phosphate + H(+). McdA and McdB together mediate carboxysome (Cb) spacing, size, ultrastructure and probably inheritance in the cell, together they prevent Cb aggregation. McdA is an ATPase that forms dynamic gradients on the nucleoid in response to adapter protein McdB, which associates with carboxysomes. The interplay between McdA gradients on the nucleoid and McdB-bound carboxysomes result in the equal spacing of Cbs along the cell length. In terms of biological role, incorrect positioning (aggregation) of carboxysomes results in reduced CO(2) fixation by encapsulated ribulose-1,5-bisphosphate carboxylase (RuBisCO, cbbL/cbbS), which leads to slower growth. The chain is Maintenance of carboxysome distribution protein A from Gloeobacter kilaueensis (strain ATCC BAA-2537 / CCAP 1431/1 / ULC 316 / JS1).